We begin with the raw amino-acid sequence, 458 residues long: ATP synthase subunit beta 2 (458 aa).

148–155 (GGAGVGKT) is a binding site for ATP.

Belongs to the ATPase alpha/beta chains family. In terms of assembly, F-type ATPases have 2 components, CF(1) - the catalytic core - and CF(0) - the membrane proton channel. CF(1) has five subunits: alpha(3), beta(3), gamma(1), delta(1), epsilon(1). CF(0) has three main subunits: a(1), b(2) and c(9-12). The alpha and beta chains form an alternating ring which encloses part of the gamma chain. CF(1) is attached to CF(0) by a central stalk formed by the gamma and epsilon chains, while a peripheral stalk is formed by the delta and b chains.

Its subcellular location is the cell inner membrane. The catalysed reaction is ATP + H2O + 4 H(+)(in) = ADP + phosphate + 5 H(+)(out). Its function is as follows. Produces ATP from ADP in the presence of a proton gradient across the membrane. The catalytic sites are hosted primarily by the beta subunits. The sequence is that of ATP synthase subunit beta 2 from Marinomonas sp. (strain MWYL1).